A 260-amino-acid chain; its full sequence is NAD kinase (260 aa).

Asp-49 acts as the Proton acceptor in catalysis. NAD(+)-binding positions include 49-50 (DG), 119-120 (NE), Asp-149, Ala-157, and 160-165 (TAYNLS).

Belongs to the NAD kinase family. Requires a divalent metal cation as cofactor.

It is found in the cytoplasm. The enzyme catalyses NAD(+) + ATP = ADP + NADP(+) + H(+). In terms of biological role, involved in the regulation of the intracellular balance of NAD and NADP, and is a key enzyme in the biosynthesis of NADP. Catalyzes specifically the phosphorylation on 2'-hydroxyl of the adenosine moiety of NAD to yield NADP. The sequence is that of NAD kinase from Caulobacter vibrioides (strain ATCC 19089 / CIP 103742 / CB 15) (Caulobacter crescentus).